The chain runs to 241 residues: Alkylated DNA repair protein ALKBH6 homolog (241 aa).

Residues 87–232 form the Fe2OG dioxygenase domain; that stretch reads AINHVLINEY…RVSLTCRLVP (146 aa). 3 residues coordinate Fe cation: histidine 105, aspartate 107, and histidine 181. 2 residues coordinate 2-oxoglutarate: arginine 223 and arginine 229.

This sequence belongs to the alkB family. The cofactor is Fe(2+).

It localises to the nucleus. In terms of biological role, probable RNA demethylase that binds to both N6-methyladenosine-containing- (m(6)A) and C5-methylcytidine-containing- (m(5)C) RNAs, thus being a probable m(6)A and m(5)C eraser. Involved in responses to abscisic acid (ABA) via the modulation of the expression of ABA signaling-related genes (e.g. ABI3 and ABI4). Acts as a negative regulator during seed germination under abiotic stresses (e.g. salt, cold and ABA). Positive modulator of seedling growth and survival in response to drought and heat, but counteracts tolerance to salt. The protein is Alkylated DNA repair protein ALKBH6 homolog of Arabidopsis thaliana (Mouse-ear cress).